The sequence spans 157 residues: Protein Smg (157 aa).

It belongs to the Smg family.

This is Protein Smg from Shigella boydii serotype 4 (strain Sb227).